Reading from the N-terminus, the 479-residue chain is Transcription factor CP2-like protein 1 (479 aa).

One can recognise a Grh/CP2 DB domain in the interval 43 to 280 (RLPPLQYVLC…PSPSYNGSPN (238 aa)). Disordered stretches follow at residues 219-245 (KPKGADRKQKTDREKMEKRTAQEKEKY) and 271-301 (PSPSYNGSPNSFGLGEGNASPTHPVEALPVG). Residues 221 to 245 (KGADRKQKTDREKMEKRTAQEKEKY) are compositionally biased toward basic and acidic residues. Positions 261–365 (PDVAYQVNSA…IRLFNAIKGR (105 aa)) are SAM2-like domain. Positions 271–281 (PSPSYNGSPNS) are enriched in polar residues.

This sequence belongs to the grh/CP2 family. CP2 subfamily. In terms of assembly, forms homohexamers via its SAM-like domain. Interacts with MTA1; which is indispensable for TFCP2l1-mediated self-renewal-promoting effect and endoderm-inhibiting action. Highly expressed in placental JEG-3 cells and very low levels of expression in non-steroidogenic cells. No expression was seen in adrenal NCI-H295A cells or in adrenal tissue.

It localises to the nucleus. Functionally, transcription factor that facilitates establishment and maintenance of pluripotency in embryonic stem cells (ESCs). With KLF2, acts as the major effector of self-renewal that mediates induction of pluripotency downstream of LIF/STAT3 and Wnt/beta-catenin signaling. Required for normal duct development in the salivary gland and kidney. Coordinates the development of the kidney collecting ducts intercalated (IC) and principal (PC) cells, which regulate acid-base and salt-water homeostasis, respectively. Regulates the expression of IC genes including subunits B1 and D2 of the V-ATPase complex, OXGR1, CA12, SLC4A1, AQP6 and IC-specific transcription factor FOXI1. Also regulates the expression of JAG1 and subsequent notch signaling in the collecting duct. JAG1 initiates notch signaling in PCs but inhibits notch signaling in ICs. Acts as a transcriptional suppressor that may suppress UBP1-mediated transcriptional activation. Modulates the placental expression of CYP11A1. This Homo sapiens (Human) protein is Transcription factor CP2-like protein 1 (TFCP2L1).